The primary structure comprises 353 residues: Photosystem II protein D1 (353 aa).

N-acetylthreonine is present on threonine 2. Threonine 2 is modified (phosphothreonine). 3 consecutive transmembrane segments (helical) span residues 29–46, 118–133, and 142–156; these read YIGW…TATS, HFLL…EWEL, and WIAV…AATA. Histidine 118 lines the chlorophyll a pocket. Position 126 (tyrosine 126) interacts with pheophytin a. [CaMn4O5] cluster-binding residues include aspartate 170 and glutamate 189. The helical transmembrane segment at 197-218 threads the bilayer; sequence FHMLGVAGVFGGSLFSAMHGSL. Histidine 198 is a binding site for chlorophyll a. A quinone contacts are provided by residues histidine 215 and 264 to 265; that span reads SF. Histidine 215 contributes to the Fe cation binding site. Fe cation is bound at residue histidine 272. The chain crosses the membrane as a helical span at residues 274 to 288; that stretch reads FLAAWPVVGIWFTAL. [CaMn4O5] cluster contacts are provided by histidine 332, glutamate 333, aspartate 342, and alanine 344. Residues 345–353 constitute a propeptide that is removed on maturation; sequence AVEAPSING.

Belongs to the reaction center PufL/M/PsbA/D family. PSII is composed of 1 copy each of membrane proteins PsbA, PsbB, PsbC, PsbD, PsbE, PsbF, PsbH, PsbI, PsbJ, PsbK, PsbL, PsbM, PsbT, PsbX, PsbY, PsbZ, Psb30/Ycf12, at least 3 peripheral proteins of the oxygen-evolving complex and a large number of cofactors. It forms dimeric complexes. The cofactor is The D1/D2 heterodimer binds P680, chlorophylls that are the primary electron donor of PSII, and subsequent electron acceptors. It shares a non-heme iron and each subunit binds pheophytin, quinone, additional chlorophylls, carotenoids and lipids. D1 provides most of the ligands for the Mn4-Ca-O5 cluster of the oxygen-evolving complex (OEC). There is also a Cl(-1) ion associated with D1 and D2, which is required for oxygen evolution. The PSII complex binds additional chlorophylls, carotenoids and specific lipids.. In terms of processing, tyr-161 forms a radical intermediate that is referred to as redox-active TyrZ, YZ or Y-Z. C-terminally processed by CTPA; processing is essential to allow assembly of the oxygen-evolving complex and thus photosynthetic growth.

It is found in the plastid. The protein localises to the chloroplast thylakoid membrane. It catalyses the reaction 2 a plastoquinone + 4 hnu + 2 H2O = 2 a plastoquinol + O2. Photosystem II (PSII) is a light-driven water:plastoquinone oxidoreductase that uses light energy to abstract electrons from H(2)O, generating O(2) and a proton gradient subsequently used for ATP formation. It consists of a core antenna complex that captures photons, and an electron transfer chain that converts photonic excitation into a charge separation. The D1/D2 (PsbA/PsbD) reaction center heterodimer binds P680, the primary electron donor of PSII as well as several subsequent electron acceptors. The protein is Photosystem II protein D1 of Lotus japonicus (Lotus corniculatus var. japonicus).